A 589-amino-acid chain; its full sequence is Zinc finger and BTB domain-containing protein 46 (589 aa).

Positions 31 to 99 constitute a BTB domain; it reads CDVCVVVEGK…MYSAHLALTS (69 aa). The interval 173 to 330 is disordered; the sequence is RRTSPANSSG…ASSSDSRGER (158 aa). Residues 197 to 207 are compositionally biased toward basic and acidic residues; it reads GKEDQEPKADG. K229 is covalently cross-linked (Glycyl lysine isopeptide (Lys-Gly) (interchain with G-Cter in SUMO2)). A Phosphoserine modification is found at S234. The segment covering 305–325 has biased composition (polar residues); it reads WPFSSRDSNADLSVTEASSSD. 2 C2H2-type zinc fingers span residues 418 to 436 and 446 to 468; these read FKCP…LKRH and YPCE…TLVH. The interval 512 to 589 is disordered; sequence PLDHGGGGGE…GPDKDFAWLS (78 aa). A compositionally biased stretch (acidic residues) spans 546–570; sequence EELGEDDEGLAPEDALLADDKDEED.

Sumoylated. Desumoylation by DESI1 reverses transcriptional repression activity.

Its subcellular location is the nucleus. Functions as a transcriptional repressor for PRDM1. This Homo sapiens (Human) protein is Zinc finger and BTB domain-containing protein 46 (ZBTB46).